The primary structure comprises 491 residues: uncharacterized protein (491 aa).

266-273 (GIQGTGKS) is a binding site for ATP.

This sequence belongs to the AAA ATPase family. Highly divergent.

The protein resides in the plastid. It localises to the chloroplast. This is an uncharacterized protein from Porphyra purpurea (Red seaweed).